A 228-amino-acid polypeptide reads, in one-letter code: Octanoyltransferase (228 aa).

Residues 40–225 (GEEAERVWLV…SFERVFDAAP (186 aa)) enclose the BPL/LPL catalytic domain. Substrate-binding positions include 79 to 86 (RGGQWTYH), 156 to 158 (AIG), and 169 to 171 (GIA). Cysteine 187 serves as the catalytic Acyl-thioester intermediate.

Belongs to the LipB family.

The protein localises to the cytoplasm. The catalysed reaction is octanoyl-[ACP] + L-lysyl-[protein] = N(6)-octanoyl-L-lysyl-[protein] + holo-[ACP] + H(+). It functions in the pathway protein modification; protein lipoylation via endogenous pathway; protein N(6)-(lipoyl)lysine from octanoyl-[acyl-carrier-protein]: step 1/2. In terms of biological role, catalyzes the transfer of endogenously produced octanoic acid from octanoyl-acyl-carrier-protein onto the lipoyl domains of lipoate-dependent enzymes. Lipoyl-ACP can also act as a substrate although octanoyl-ACP is likely to be the physiological substrate. This is Octanoyltransferase from Acidiphilium cryptum (strain JF-5).